Reading from the N-terminus, the 412-residue chain is Phosphoglycerate kinase (412 aa).

Substrate-binding positions include 22 to 24, Arg-37, 60 to 63, Arg-120, and Arg-172; these read DFN and HLGK. Residues Lys-223, Gly-310, Glu-341, and 368-371 each bind ATP; that span reads GGDS.

Belongs to the phosphoglycerate kinase family. As to quaternary structure, monomer.

Its subcellular location is the cytoplasm. The enzyme catalyses (2R)-3-phosphoglycerate + ATP = (2R)-3-phospho-glyceroyl phosphate + ADP. The protein operates within carbohydrate degradation; glycolysis; pyruvate from D-glyceraldehyde 3-phosphate: step 2/5. The sequence is that of Phosphoglycerate kinase from Spiroplasma citri.